We begin with the raw amino-acid sequence, 456 residues long: Putative alanyl-tRNA editing protein alaX (456 aa).

Zn(2+)-binding residues include histidine 125, histidine 129, cysteine 240, and histidine 244.

This sequence belongs to the class-II aminoacyl-tRNA synthetase family. Alax-L subfamily. The cofactor is Zn(2+).

Functionally, may function in trans to edit the amino acid moiety from incorrectly charged tRNA(Ala). The protein is Putative alanyl-tRNA editing protein alaX of Saccharomyces cerevisiae (strain ATCC 204508 / S288c) (Baker's yeast).